Reading from the N-terminus, the 854-residue chain is Protein translocase subunit SecA (854 aa).

ATP contacts are provided by residues glutamine 89, 107–111 (GEGKT), and aspartate 501.

Belongs to the SecA family. Monomer and homodimer. Part of the essential Sec protein translocation apparatus which comprises SecA, SecYEG and auxiliary proteins SecDF-YajC and YidC.

The protein resides in the cell inner membrane. Its subcellular location is the cytoplasm. It catalyses the reaction ATP + H2O + cellular proteinSide 1 = ADP + phosphate + cellular proteinSide 2.. In terms of biological role, part of the Sec protein translocase complex. Interacts with the SecYEG preprotein conducting channel. Has a central role in coupling the hydrolysis of ATP to the transfer of proteins into and across the cell membrane, serving both as a receptor for the preprotein-SecB complex and as an ATP-driven molecular motor driving the stepwise translocation of polypeptide chains across the membrane. This chain is Protein translocase subunit SecA, found in Pelagibacter ubique (strain HTCC1062).